A 103-amino-acid chain; its full sequence is Large ribosomal subunit protein bL21 (103 aa).

The protein belongs to the bacterial ribosomal protein bL21 family. As to quaternary structure, part of the 50S ribosomal subunit. Contacts protein L20.

In terms of biological role, this protein binds to 23S rRNA in the presence of protein L20. The protein is Large ribosomal subunit protein bL21 of Nautilia profundicola (strain ATCC BAA-1463 / DSM 18972 / AmH).